A 216-amino-acid polypeptide reads, in one-letter code: Nicotinamidase (216 aa).

Asp-8 is a catalytic residue. Asp-51, His-53, and His-94 together coordinate Zn(2+). Residue Lys-122 is part of the active site. The Nucleophile role is filled by Cys-167.

Belongs to the isochorismatase family.

The protein localises to the cytoplasm. Its subcellular location is the nucleus. It localises to the peroxisome. The catalysed reaction is nicotinamide + H2O = nicotinate + NH4(+). The protein operates within cofactor biosynthesis; nicotinate biosynthesis; nicotinate from nicotinamide: step 1/1. Its activity is regulated as follows. Inhibited by N-ethylmaleimide, HgCl(2) and PCMB. Competitively inhibited by NAD, NMN and 3-acetylpyridine. Catalyzes the deamidation of nicotinamide, an early step in the NAD(+) salvage pathway. Positively regulates SIR2-mediated silencing and longevity by preventing the accumulation of intracellular nicotinamide, an inhibitor of SIR2, during times of stress. Also acts on nicotinyl hydroxamate. This Saccharomyces cerevisiae (strain ATCC 204508 / S288c) (Baker's yeast) protein is Nicotinamidase (PNC1).